We begin with the raw amino-acid sequence, 243 residues long: 1-(5-phosphoribosyl)-5-[(5-phosphoribosylamino)methylideneamino] imidazole-4-carboxamide isomerase (243 aa).

Asp8 functions as the Proton acceptor in the catalytic mechanism. The active-site Proton donor is the Asp130.

This sequence belongs to the HisA/HisF family.

The protein resides in the cytoplasm. The catalysed reaction is 1-(5-phospho-beta-D-ribosyl)-5-[(5-phospho-beta-D-ribosylamino)methylideneamino]imidazole-4-carboxamide = 5-[(5-phospho-1-deoxy-D-ribulos-1-ylimino)methylamino]-1-(5-phospho-beta-D-ribosyl)imidazole-4-carboxamide. Its pathway is amino-acid biosynthesis; L-histidine biosynthesis; L-histidine from 5-phospho-alpha-D-ribose 1-diphosphate: step 4/9. This Acinetobacter baylyi (strain ATCC 33305 / BD413 / ADP1) protein is 1-(5-phosphoribosyl)-5-[(5-phosphoribosylamino)methylideneamino] imidazole-4-carboxamide isomerase.